Reading from the N-terminus, the 314-residue chain is WD repeat-containing protein 38 (314 aa).

WD repeat units lie at residues 19 to 58, 61 to 100, 103 to 142, 145 to 184, 190 to 228, 231 to 272, and 274 to 312; these read QHGG…LLWR, GHTG…CLRV, GHQR…MLRL, GHRD…PAVS, GHSA…LLIQ, GHVT…ETLK, and VLDV…PRDP. A disordered region spans residues 294 to 314; it reads AADQTRRQISRTSKSPRDPQT.

The polypeptide is WD repeat-containing protein 38 (WDR38) (Homo sapiens (Human)).